The primary structure comprises 112 residues: UPF0102 protein THEYE_A1950 (112 aa).

The protein belongs to the UPF0102 family.

The protein is UPF0102 protein THEYE_A1950 of Thermodesulfovibrio yellowstonii (strain ATCC 51303 / DSM 11347 / YP87).